The primary structure comprises 90 residues: DNA-directed RNA polymerase subunit omega (90 aa).

The tract at residues 69–90 (RQEQQEQDAAELAAVSSITHNR) is disordered.

This sequence belongs to the RNA polymerase subunit omega family. As to quaternary structure, the RNAP catalytic core consists of 2 alpha, 1 beta, 1 beta' and 1 omega subunit. When a sigma factor is associated with the core the holoenzyme is formed, which can initiate transcription.

The enzyme catalyses RNA(n) + a ribonucleoside 5'-triphosphate = RNA(n+1) + diphosphate. Promotes RNA polymerase assembly. Latches the N- and C-terminal regions of the beta' subunit thereby facilitating its interaction with the beta and alpha subunits. This chain is DNA-directed RNA polymerase subunit omega, found in Aliivibrio fischeri (strain ATCC 700601 / ES114) (Vibrio fischeri).